The following is a 452-amino-acid chain: Agmatine coumaroyltransferase (452 aa).

Catalysis depends on proton acceptor residues histidine 163 and aspartate 396.

This sequence belongs to the plant acyltransferase family.

It carries out the reaction 4-coumaroyl-CoA + agmatine = N-(4-guanidinobutyl)-4-hydroxycinnamamide + CoA + H(+). In terms of biological role, involved in the biosynthesis of hydroxycinnamic acid amides, which play a role in defense against pathogens. Agmatine is the preferred acyl acceptor, lower activity is observed towards putrescine. The preferred acyl donor is p-coumaroyl-CoA, lower activity is seen towards feruloyl-CoA. The sequence is that of Agmatine coumaroyltransferase from Arabidopsis thaliana (Mouse-ear cress).